The sequence spans 1154 residues: Diacylglycerol kinase eta (1154 aa).

The tract at residues 1–54 is disordered; sequence MAGAGYQHHPPGGAAVGTSAVSPTAAGPGEDSSDSEAEQGGPQKLIRKVSTSGQ. Residues 59–152 form the PH domain; sequence TSIKEGQLLK…WISSLKSVQS (94 aa). Phorbol-ester/DAG-type zinc fingers lie at residues 169–219 and 241–292; these read MHNW…TNNC and PHQW…HPVC. A DAGKc domain is found at 322-457; that stretch reads FCVSPLLVFV…LDRWSIMTYE (136 aa). Disordered regions lie at residues 560 to 608, 634 to 678, and 1123 to 1154; these read QASR…AVKP, DEQT…APEA, and FKME…SPGN. A compositionally biased stretch (acidic residues) spans 573–586; it reads PEEDAVESSSEESL. Residues 656–667 show a composition bias toward basic and acidic residues; it reads DDSKDNDTKESP. Residues 1131 to 1154 are compositionally biased toward polar residues; sequence QKTSSQPGPGDTESGSYEANSPGN.

It belongs to the eukaryotic diacylglycerol kinase family. Interacts with RAF1 and BRAF. Phosphorylated. Phosphorylation does not inhibit catalytic activity. As to expression, expressed in a wide variety of tissues. Most abundant in the brain and testis; also found in lung, spleen, and prostate (at protein level).

Its subcellular location is the cytoplasm. The protein resides in the cell membrane. It catalyses the reaction a 1,2-diacyl-sn-glycerol + ATP = a 1,2-diacyl-sn-glycero-3-phosphate + ADP + H(+). The enzyme catalyses 1,2-di-(9Z-octadecenoyl)-sn-glycerol + ATP = 1,2-di-(9Z-octadecenoyl)-sn-glycero-3-phosphate + ADP + H(+). The protein operates within lipid metabolism; glycerolipid metabolism. Functionally, diacylglycerol kinase that converts diacylglycerol/DAG into phosphatidic acid/phosphatidate/PA and regulates the respective levels of these two bioactive lipids. Thereby, acts as a central switch between the signaling pathways activated by these second messengers with different cellular targets and opposite effects in numerous biological processes. Plays a key role in promoting cell growth. Activates the Ras/B-Raf/C-Raf/MEK/ERK signaling pathway induced by EGF. Regulates the recruitment of RAF1 and BRAF from cytoplasm to membranes and their heterodimerization. This is Diacylglycerol kinase eta (DGKH) from Mesocricetus auratus (Golden hamster).